A 145-amino-acid chain; its full sequence is Deoxyuridine 5'-triphosphate nucleotidohydrolase (145 aa).

Substrate contacts are provided by residues 63-65 (RSG), glutamine 76, and 80-82 (TVD).

This sequence belongs to the dUTPase family. The cofactor is Mg(2+).

The catalysed reaction is dUTP + H2O = dUMP + diphosphate + H(+). The protein operates within pyrimidine metabolism; dUMP biosynthesis; dUMP from dCTP (dUTP route): step 2/2. Functionally, this enzyme is involved in nucleotide metabolism: it produces dUMP, the immediate precursor of thymidine nucleotides and it decreases the intracellular concentration of dUTP so that uracil cannot be incorporated into DNA. The polypeptide is Deoxyuridine 5'-triphosphate nucleotidohydrolase (Chlamydia trachomatis serovar L2 (strain ATCC VR-902B / DSM 19102 / 434/Bu)).